Reading from the N-terminus, the 337-residue chain is RNA 3'-terminal phosphate cyclase (337 aa).

Residues glutamine 101 and 282 to 285 (HMSD) contribute to the ATP site. The active-site Tele-AMP-histidine intermediate is the histidine 306.

The protein belongs to the RNA 3'-terminal cyclase family. Type 1 subfamily.

The protein resides in the cytoplasm. The enzyme catalyses a 3'-end 3'-phospho-ribonucleotide-RNA + ATP = a 3'-end 2',3'-cyclophospho-ribonucleotide-RNA + AMP + diphosphate. Catalyzes the conversion of 3'-phosphate to a 2',3'-cyclic phosphodiester at the end of RNA. The mechanism of action of the enzyme occurs in 3 steps: (A) adenylation of the enzyme by ATP; (B) transfer of adenylate to an RNA-N3'P to produce RNA-N3'PP5'A; (C) and attack of the adjacent 2'-hydroxyl on the 3'-phosphorus in the diester linkage to produce the cyclic end product. The biological role of this enzyme is unknown but it is likely to function in some aspects of cellular RNA processing. The sequence is that of RNA 3'-terminal phosphate cyclase (rtcA) from Saccharolobus solfataricus (strain ATCC 35092 / DSM 1617 / JCM 11322 / P2) (Sulfolobus solfataricus).